Reading from the N-terminus, the 312-residue chain is Ribosomal RNA small subunit methyltransferase H (312 aa).

S-adenosyl-L-methionine is bound by residues 33 to 35 (SGH), Asp53, Phe80, Asp101, and Gln108.

It belongs to the methyltransferase superfamily. RsmH family.

It is found in the cytoplasm. The enzyme catalyses cytidine(1402) in 16S rRNA + S-adenosyl-L-methionine = N(4)-methylcytidine(1402) in 16S rRNA + S-adenosyl-L-homocysteine + H(+). Its function is as follows. Specifically methylates the N4 position of cytidine in position 1402 (C1402) of 16S rRNA. This is Ribosomal RNA small subunit methyltransferase H from Desulforapulum autotrophicum (strain ATCC 43914 / DSM 3382 / VKM B-1955 / HRM2) (Desulfobacterium autotrophicum).